A 173-amino-acid polypeptide reads, in one-letter code: Ribulose bisphosphate carboxylase small subunit, chloroplastic 5 (173 aa).

The N-terminal 49 residues, 1 to 49 (MASIPATVATVAQANMVAPFTGLKSNAAFPVTKKVNDFSTLPSNGGRVQ), are a transit peptide targeting the chloroplast.

It belongs to the RuBisCO small chain family. Heterohexadecamer of 8 large and 8 small subunits.

The protein localises to the plastid. It localises to the chloroplast. In terms of biological role, ruBisCO catalyzes two reactions: the carboxylation of D-ribulose 1,5-bisphosphate, the primary event in carbon dioxide fixation, as well as the oxidative fragmentation of the pentose substrate. Both reactions occur simultaneously and in competition at the same active site. Although the small subunit is not catalytic it is essential for maximal activity. The chain is Ribulose bisphosphate carboxylase small subunit, chloroplastic 5 from Flaveria pringlei.